The chain runs to 351 residues: DNA polymerase IV (351 aa).

Residues 4–185 (IIHVDMDCFF…LPLAKIPGVG (182 aa)) form the UmuC domain. The Mg(2+) site is built by Asp8 and Asp103. The active site involves Glu104.

The protein belongs to the DNA polymerase type-Y family. In terms of assembly, monomer. Mg(2+) is required as a cofactor.

Its subcellular location is the cytoplasm. It catalyses the reaction DNA(n) + a 2'-deoxyribonucleoside 5'-triphosphate = DNA(n+1) + diphosphate. Poorly processive, error-prone DNA polymerase involved in untargeted mutagenesis. Copies undamaged DNA at stalled replication forks, which arise in vivo from mismatched or misaligned primer ends. These misaligned primers can be extended by PolIV. Exhibits no 3'-5' exonuclease (proofreading) activity. May be involved in translesional synthesis, in conjunction with the beta clamp from PolIII. In Salmonella choleraesuis (strain SC-B67), this protein is DNA polymerase IV.